Here is a 670-residue protein sequence, read N- to C-terminus: DNA ligase (670 aa).

NAD(+)-binding positions include 33-37 (DAEYD), 82-83 (SL), and Glu-114. Catalysis depends on Lys-116, which acts as the N6-AMP-lysine intermediate. Arg-137, Glu-174, Lys-291, and Lys-315 together coordinate NAD(+). Residues Cys-409, Cys-412, Cys-427, and Cys-433 each contribute to the Zn(2+) site. One can recognise a BRCT domain in the interval 593–670 (GVELPLEGKT…TEQDLLNLMK (78 aa)).

Belongs to the NAD-dependent DNA ligase family. LigA subfamily. It depends on Mg(2+) as a cofactor. Mn(2+) serves as cofactor.

The catalysed reaction is NAD(+) + (deoxyribonucleotide)n-3'-hydroxyl + 5'-phospho-(deoxyribonucleotide)m = (deoxyribonucleotide)n+m + AMP + beta-nicotinamide D-nucleotide.. Its function is as follows. DNA ligase that catalyzes the formation of phosphodiester linkages between 5'-phosphoryl and 3'-hydroxyl groups in double-stranded DNA using NAD as a coenzyme and as the energy source for the reaction. It is essential for DNA replication and repair of damaged DNA. The polypeptide is DNA ligase (Vibrio campbellii (strain ATCC BAA-1116)).